A 173-amino-acid chain; its full sequence is GTP-dependent dephospho-CoA kinase (173 aa).

The GTP site is built by Asp52, Val53, Val54, Asp71, Lys73, and Asp122.

This sequence belongs to the GTP-dependent DPCK family.

The enzyme catalyses 3'-dephospho-CoA + GTP = GDP + CoA + H(+). The protein operates within cofactor biosynthesis; coenzyme A biosynthesis. In terms of biological role, catalyzes the GTP-dependent phosphorylation of the 3'-hydroxyl group of dephosphocoenzyme A to form coenzyme A (CoA). The protein is GTP-dependent dephospho-CoA kinase of Metallosphaera sedula (strain ATCC 51363 / DSM 5348 / JCM 9185 / NBRC 15509 / TH2).